A 301-amino-acid chain; its full sequence is Sulfate adenylyltransferase subunit 2 2 (301 aa).

This sequence belongs to the PAPS reductase family. CysD subfamily. Heterodimer composed of CysD, the smaller subunit, and CysN.

The enzyme catalyses sulfate + ATP + H(+) = adenosine 5'-phosphosulfate + diphosphate. It participates in sulfur metabolism; hydrogen sulfide biosynthesis; sulfite from sulfate: step 1/3. In terms of biological role, with CysN forms the ATP sulfurylase (ATPS) that catalyzes the adenylation of sulfate producing adenosine 5'-phosphosulfate (APS) and diphosphate, the first enzymatic step in sulfur assimilation pathway. APS synthesis involves the formation of a high-energy phosphoric-sulfuric acid anhydride bond driven by GTP hydrolysis by CysN coupled to ATP hydrolysis by CysD. This Shewanella sediminis (strain HAW-EB3) protein is Sulfate adenylyltransferase subunit 2 2.